Here is a 370-residue protein sequence, read N- to C-terminus: Holliday junction branch migration complex subunit RuvB 2 (370 aa).

The disordered stretch occupies residues 1–54 (MAIISSRAAGAEDPGQRQQKSSARRRESKLAFARAEGLLQPQAHPSEAQEESLR). Residues 13–214 (DPGQRQQKSS…FGQVQRLRFY (202 aa)) are large ATPase domain (RuvB-L). Residues Leu53, Arg54, Gly95, Lys98, Thr99, Thr100, 161–163 (EDF), Arg204, Tyr214, and Arg251 contribute to the ATP site. Thr99 is a Mg(2+) binding site. The tract at residues 215–285 (EPHELAEIVL…VAAAALELFQ (71 aa)) is small ATPAse domain (RuvB-S). The segment at 288-370 (PMGLDWTDRK…TAQSPLPVWS (83 aa)) is head domain (RuvB-H). Residues Arg343 and Arg348 each coordinate DNA.

Belongs to the RuvB family. As to quaternary structure, homohexamer. Forms an RuvA(8)-RuvB(12)-Holliday junction (HJ) complex. HJ DNA is sandwiched between 2 RuvA tetramers; dsDNA enters through RuvA and exits via RuvB. An RuvB hexamer assembles on each DNA strand where it exits the tetramer. Each RuvB hexamer is contacted by two RuvA subunits (via domain III) on 2 adjacent RuvB subunits; this complex drives branch migration. In the full resolvosome a probable DNA-RuvA(4)-RuvB(12)-RuvC(2) complex forms which resolves the HJ.

The protein localises to the cytoplasm. It catalyses the reaction ATP + H2O = ADP + phosphate + H(+). The RuvA-RuvB-RuvC complex processes Holliday junction (HJ) DNA during genetic recombination and DNA repair, while the RuvA-RuvB complex plays an important role in the rescue of blocked DNA replication forks via replication fork reversal (RFR). RuvA specifically binds to HJ cruciform DNA, conferring on it an open structure. The RuvB hexamer acts as an ATP-dependent pump, pulling dsDNA into and through the RuvAB complex. RuvB forms 2 homohexamers on either side of HJ DNA bound by 1 or 2 RuvA tetramers; 4 subunits per hexamer contact DNA at a time. Coordinated motions by a converter formed by DNA-disengaged RuvB subunits stimulates ATP hydrolysis and nucleotide exchange. Immobilization of the converter enables RuvB to convert the ATP-contained energy into a lever motion, pulling 2 nucleotides of DNA out of the RuvA tetramer per ATP hydrolyzed, thus driving DNA branch migration. The RuvB motors rotate together with the DNA substrate, which together with the progressing nucleotide cycle form the mechanistic basis for DNA recombination by continuous HJ branch migration. Branch migration allows RuvC to scan DNA until it finds its consensus sequence, where it cleaves and resolves cruciform DNA. This Synechococcus sp. (strain JA-3-3Ab) (Cyanobacteria bacterium Yellowstone A-Prime) protein is Holliday junction branch migration complex subunit RuvB 2.